A 295-amino-acid polypeptide reads, in one-letter code: Glycine N-acyltransferase (295 aa).

N6-acetyllysine; alternate is present on residues Lys-15, Lys-126, and Lys-140. 3 positions are modified to N6-succinyllysine; alternate: Lys-15, Lys-126, and Lys-140. Lys-158 bears the N6-acetyllysine mark. Lys-168 carries the N6-succinyllysine modification. An N6-acetyllysine; alternate modification is found at Lys-255. Lys-255 is subject to N6-succinyllysine; alternate.

The protein belongs to the glycine N-acyltransferase family. Detected in liver (at protein level).

It is found in the mitochondrion. It carries out the reaction an acyl-CoA + glycine = an N-acylglycine + CoA + H(+). The catalysed reaction is benzoyl-CoA + glycine = N-benzoylglycine + CoA + H(+). Mitochondrial acyltransferase which transfers an acyl group to the N-terminus of glycine and glutamine, although much less efficiently. Can conjugate a multitude of substrates to form a variety of N-acylglycines, thereby detoxify xenobiotics, such as benzoic acid or salicylic acid, and endogenous organic acids, such as isovaleric acid. This is Glycine N-acyltransferase (GLYAT) from Bos taurus (Bovine).